A 146-amino-acid polypeptide reads, in one-letter code: P antigen family member 1 (146 aa).

The interval 16–146 (YVESSEESSD…PEEDEGQSQP (131 aa)) is disordered. Positions 19-32 (SSEESSDEQPDEVE) are enriched in acidic residues. At Ser-63 the chain carries Phosphoserine. Residues 79-92 (PDTKRVCLRNEEQM) are compositionally biased toward basic and acidic residues. At Ser-105 the chain carries Phosphoserine. A compositionally biased stretch (basic and acidic residues) spans 107–120 (EQVHPKTGCERGDG). A Phosphoserine modification is found at Ser-144.

The protein belongs to the GAGE family. Isolated from prostate cancer cell lines; expression associated with progression to androgen insensitive phenotype. Expressed in normal testis and at lower level in normal placenta.

In Homo sapiens (Human), this protein is P antigen family member 1 (PAGE1).